The following is a 749-amino-acid chain: Basic juvenile hormone-suppressible protein 2 (749 aa).

Positions 1-14 (MRAVLLFVVSLAAL) are cleaved as a signal peptide.

It belongs to the hemocyanin family. In terms of tissue distribution, fat body, and hemolymph of larvae.

The protein is Basic juvenile hormone-suppressible protein 2 (BJSP-2) of Trichoplusia ni (Cabbage looper).